A 427-amino-acid polypeptide reads, in one-letter code: tRNA(Ile)-lysidine synthase (427 aa).

21–26 contributes to the ATP binding site; the sequence is SGGADS.

The protein belongs to the tRNA(Ile)-lysidine synthase family.

It is found in the cytoplasm. The catalysed reaction is cytidine(34) in tRNA(Ile2) + L-lysine + ATP = lysidine(34) in tRNA(Ile2) + AMP + diphosphate + H(+). Its function is as follows. Ligates lysine onto the cytidine present at position 34 of the AUA codon-specific tRNA(Ile) that contains the anticodon CAU, in an ATP-dependent manner. Cytidine is converted to lysidine, thus changing the amino acid specificity of the tRNA from methionine to isoleucine. This Actinobacillus succinogenes (strain ATCC 55618 / DSM 22257 / CCUG 43843 / 130Z) protein is tRNA(Ile)-lysidine synthase.